The following is a 218-amino-acid chain: Octanoyltransferase (218 aa).

One can recognise a BPL/LPL catalytic domain in the interval 31-206; that stretch reads EETPDEVWLV…ELVNLLGYEQ (176 aa). Residues 70 to 77, 137 to 139, and 150 to 152 each bind substrate; these read RGGQVTYH, SLG, and GLA. The active-site Acyl-thioester intermediate is Cys168.

Belongs to the LipB family.

Its subcellular location is the cytoplasm. The catalysed reaction is octanoyl-[ACP] + L-lysyl-[protein] = N(6)-octanoyl-L-lysyl-[protein] + holo-[ACP] + H(+). Its pathway is protein modification; protein lipoylation via endogenous pathway; protein N(6)-(lipoyl)lysine from octanoyl-[acyl-carrier-protein]: step 1/2. In terms of biological role, catalyzes the transfer of endogenously produced octanoic acid from octanoyl-acyl-carrier-protein onto the lipoyl domains of lipoate-dependent enzymes. Lipoyl-ACP can also act as a substrate although octanoyl-ACP is likely to be the physiological substrate. The sequence is that of Octanoyltransferase from Vibrio vulnificus (strain CMCP6).